The following is a 351-amino-acid chain: Magnesium-protoporphyrin IX monomethyl ester [oxidative] cyclase 1 (351 aa).

This sequence belongs to the AcsF family. The cofactor is Fe cation.

It catalyses the reaction Mg-protoporphyrin IX 13-monomethyl ester + 3 NADPH + 3 O2 + 2 H(+) = 3,8-divinyl protochlorophyllide a + 3 NADP(+) + 5 H2O. Its pathway is porphyrin-containing compound metabolism; chlorophyll biosynthesis (light-independent). Functionally, catalyzes the formation of the isocyclic ring in chlorophyll biosynthesis. Mediates the cyclase reaction, which results in the formation of divinylprotochlorophyllide (Pchlide) characteristic of all chlorophylls from magnesium-protoporphyrin IX 13-monomethyl ester (MgPMME). The chain is Magnesium-protoporphyrin IX monomethyl ester [oxidative] cyclase 1 from Nostoc sp. (strain PCC 7120 / SAG 25.82 / UTEX 2576).